A 422-amino-acid polypeptide reads, in one-letter code: Acyl-[acyl-carrier-protein] desaturase 6, chloroplastic (422 aa).

The N-terminal 46 residues, 1–46 (MAATATMAMPLANRLRCKPNTNSSSPSRTLFGRRVTMISSSRWMCR), are a transit peptide targeting the chloroplast. Residues Glu-154, Glu-192, His-195, Glu-245, Glu-280, and His-283 each contribute to the Fe cation site.

Belongs to the fatty acid desaturase type 2 family. As to quaternary structure, homodimer. The cofactor is Fe(2+).

It localises to the plastid. The protein resides in the chloroplast. It functions in the pathway lipid metabolism; fatty acid metabolism. Introduces a cis double bond in the acyl chain of an acyl-[acyl-carrier protein]. The chain is Acyl-[acyl-carrier-protein] desaturase 6, chloroplastic from Oryza sativa subsp. indica (Rice).